Reading from the N-terminus, the 103-residue chain is Colicin-V (103 aa).

Residues 1–15 (MRTLTLNELDSVSGG) constitute a propeptide that is removed on maturation. Cys91 and Cys102 are joined by a disulfide.

It localises to the secreted. Functionally, colicin V kills sensitive cells by disrupting the membrane potential. Colicins are polypeptide toxins produced by, and active against E.coli and closely related bacteria. This Escherichia coli protein is Colicin-V (cvaC).